We begin with the raw amino-acid sequence, 341 residues long: Anthranilate phosphoribosyltransferase (341 aa).

5-phospho-alpha-D-ribose 1-diphosphate is bound by residues Gly81, Gly84 to Asp85, Asn91 to Thr94, Lys109 to Ser117, and Ser121. Gly81 serves as a coordination point for anthranilate. Mg(2+) is bound at residue Ser93. Asn112 contacts anthranilate. Arg167 is a binding site for anthranilate. The Mg(2+) site is built by Asp226 and Glu227.

The protein belongs to the anthranilate phosphoribosyltransferase family. Homodimer. Requires Mg(2+) as cofactor.

It catalyses the reaction N-(5-phospho-beta-D-ribosyl)anthranilate + diphosphate = 5-phospho-alpha-D-ribose 1-diphosphate + anthranilate. Its pathway is amino-acid biosynthesis; L-tryptophan biosynthesis; L-tryptophan from chorismate: step 2/5. Catalyzes the transfer of the phosphoribosyl group of 5-phosphorylribose-1-pyrophosphate (PRPP) to anthranilate to yield N-(5'-phosphoribosyl)-anthranilate (PRA). The sequence is that of Anthranilate phosphoribosyltransferase from Saccharophagus degradans (strain 2-40 / ATCC 43961 / DSM 17024).